The following is an 822-amino-acid chain: Molybdenum cofactor sulfurase (822 aa).

K245 is modified (N6-(pyridoxal phosphate)lysine). The active site involves C412. In terms of domain architecture, MOSC spans 658 to 814 (LRLIRQSSND…LKTYSPIKAI (157 aa)).

It belongs to the class-V pyridoxal-phosphate-dependent aminotransferase family. MOCOS subfamily. The cofactor is pyridoxal 5'-phosphate.

It catalyses the reaction Mo-molybdopterin + L-cysteine + AH2 = thio-Mo-molybdopterin + L-alanine + A + H2O. Its pathway is cofactor biosynthesis; molybdopterin biosynthesis. In terms of biological role, sulfurates the molybdenum cofactor. Sulfation of molybdenum is essential for xanthine dehydrogenase (XDH) and aldehyde oxidase (ADO) enzymes in which molybdenum cofactor is liganded by 1 oxygen and 1 sulfur atom in active form. The chain is Molybdenum cofactor sulfurase from Bombyx mori (Silk moth).